The chain runs to 593 residues: MTADNAIFIPPYKADDQDVVVELNNRFGADAFVAQETRTGMPVLWVKRAQLKEVLSFLRGVAKPYSMLYDLHGVDERLRTQRRGLPAADFSVFYHLLSIERNSDVMIKVSLSEGDLNLPTVTGIWPNANWYEREVWDMFGIDFAGHPHLSRIMMPPTWEGHPLRKDYPARATEFDPYSLTLAKQQLEEESARFNPEAWGMKRQGANEDYMFLNLGPNHPSAHGAFRIVLQLDGEEIVDCVPDIGYHHRGAEKMAERQSWHSFIPYTDRIDYLGGVMNNLPYVLAVEKLAGIKVPQKVDVIRIMLAEFFRITSHLLFLGTYIQDVGAMTPVFFTFTDRQRAYTVIEAITGFRLHPAWYRIGGVAHDLPRGWDKLVKDFVEWLPKRLDEYTKAALQNSILKGRTIGVAAYNTKEALEWGTTGAGLRATGCNFDLRKARPYSGYENFEFEVPLAHNGDAYDRCMVRVEEMRQSIRIIDQCLRNMPEGPYKADHPLTTPPPKERTLQHIETLITHFLQVSWGPVMPANESFQMIEATKGINSYYLTSDGGTMSYRTRIRTPSYPHLQQIPSVIKGSMVADLIAYLGSIDFVMADVDR.

Residues 1 to 184 (MTADNAIFIP…DPYSLTLAKQ (184 aa)) are NADH dehydrogenase I subunit C. The tract at residues 208–593 (DYMFLNLGPN…IDFVMADVDR (386 aa)) is NADH dehydrogenase I subunit D.

This sequence in the N-terminal section; belongs to the complex I 30 kDa subunit family. It in the C-terminal section; belongs to the complex I 49 kDa subunit family. As to quaternary structure, NDH-1 is composed of 13 different subunits. Subunits NuoB, CD, E, F, and G constitute the peripheral sector of the complex.

Its subcellular location is the cell inner membrane. It carries out the reaction a quinone + NADH + 5 H(+)(in) = a quinol + NAD(+) + 4 H(+)(out). Its function is as follows. NDH-1 shuttles electrons from NADH, via FMN and iron-sulfur (Fe-S) centers, to quinones in the respiratory chain. The immediate electron acceptor for the enzyme in this species is believed to be ubiquinone. Couples the redox reaction to proton translocation (for every two electrons transferred, four hydrogen ions are translocated across the cytoplasmic membrane), and thus conserves the redox energy in a proton gradient. This Pseudomonas putida (strain ATCC 47054 / DSM 6125 / CFBP 8728 / NCIMB 11950 / KT2440) protein is NADH-quinone oxidoreductase subunit C/D.